The primary structure comprises 307 residues: Cyclin-dependent kinase 5 activator 1 (307 aa).

Phosphoserine; by CDK5 is present on serine 8. The tract at residues 96 to 136 is disordered; the sequence is STFAQPPPAQPPAPPANQLSGSQTGVSSSVKKAPHPSVTSA. Residues 100 to 110 are compositionally biased toward pro residues; sequence QPPPAQPPAPP. The span at 112–125 shows a compositional bias: polar residues; that stretch reads NQLSGSQTGVSSSV. Threonine 138 is subject to Phosphothreonine; by CDK5.

It belongs to the cyclin-dependent kinase 5 activator family. As to quaternary structure, heterodimer composed of a catalytic subunit CDK5 and a regulatory subunit CDK5R1 (p25) and macromolecular complex composed of at least CDK5, CDK5R1 (p35) and CDK5RAP1 or CDK5RAP2 or CDK5RAP3. Only the heterodimer shows kinase activity. Interacts with EPHA4 and NGEF; may mediate the activation of NGEF by EPHA4. Interacts with RASGRF2. The complex p35/CDK5 interacts with CLOCK. In terms of processing, the p35 form is proteolytically cleaved by calpain, giving rise to the p25 form. P35 has a 5 to 10 fold shorter half-life compared to p25. The conversion results in deregulation of the CDK5 kinase: p25/CDK5 kinase displays an increased and altered tau phosphorylation in comparison to the p35/CDK5 kinase in vivo. Myristoylated. A proper myristoylation signal is essential for the proper distribution of p35. Post-translationally, phosphorylation at Ser-8 and Thr-138 by CDK5 prevents calpain-mediated proteolysis. In terms of processing, ubiquitinated, leading to its degradation: degradation of p35 by proteasome results in down-regulation of CDK5 activity. During this process, CDK5 phosphorylates p35 and induces its ubiquitination and subsequent degradation. Ubiquitinated by the CRL2(FEM1B) complex, which recognizes the -Gly-Leu-Asp-Arg C-degron at the C-terminus, leading to its degradation. In terms of tissue distribution, brain and neuron specific.

The protein localises to the cell membrane. Its subcellular location is the cell projection. It is found in the neuron projection. It localises to the nucleus. The protein resides in the cytoplasm. The protein localises to the perinuclear region. Its subcellular location is the perikaryon. P35 is a neuron specific activator of CDK5. The complex p35/CDK5 is required for neurite outgrowth and cortical lamination. Involved in dendritic spine morphogenesis by mediating the EFNA1-EPHA4 signaling. Activator of TPKII. The complex p35/CDK5 participates in the regulation of the circadian clock by modulating the function of CLOCK protein: phosphorylates CLOCK at 'Thr-451' and 'Thr-461' and regulates the transcriptional activity of the CLOCK-BMAL1 heterodimer in association with altered stability and subcellular distribution. The chain is Cyclin-dependent kinase 5 activator 1 (CDK5R1) from Spermophilus citellus (European ground squirrel).